A 63-amino-acid polypeptide reads, in one-letter code: Prokaryotic ubiquitin-like protein Pup 1 (63 aa).

2 stretches are compositionally biased toward basic and acidic residues: residues 1-12 and 24-33; these read MSQEKVQRHGGG and GQERREKLGE. The segment at 1 to 35 is disordered; the sequence is MSQEKVQRHGGGDGEEESGPEAAGQERREKLGEDV. Residues 20–57 are ARC ATPase binding; that stretch reads PEAAGQERREKLGEDVDAILDEIDDVLEENAEDFVRAY. The stretch at 25 to 51 forms a coiled coil; it reads QERREKLGEDVDAILDEIDDVLEENAE. Gln-63 is modified (deamidated glutamine). Gln-63 is covalently cross-linked (Isoglutamyl lysine isopeptide (Gln-Lys) (interchain with K-? in acceptor proteins)).

This sequence belongs to the prokaryotic ubiquitin-like protein family. In terms of assembly, strongly interacts with the proteasome-associated ATPase ARC through a hydrophobic interface; the interacting region of Pup lies in its C-terminal half. There is one Pup binding site per ARC hexamer ring. Is modified by deamidation of its C-terminal glutamine to glutamate by the deamidase Dop, a prerequisite to the subsequent pupylation process.

It functions in the pathway protein degradation; proteasomal Pup-dependent pathway. In terms of biological role, protein modifier that is covalently attached to lysine residues of substrate proteins, thereby targeting them for proteasomal degradation. The tagging system is termed pupylation. The polypeptide is Prokaryotic ubiquitin-like protein Pup 1 (Saccharopolyspora erythraea (strain ATCC 11635 / DSM 40517 / JCM 4748 / NBRC 13426 / NCIMB 8594 / NRRL 2338)).